We begin with the raw amino-acid sequence, 38 residues long: NFLEMLKENCKLLWKRQKQKFRIPMPESLCQILKKKKQ.

Residues Q19 and Q38 each carry the glutamine amide modification.

This sequence belongs to the cationic peptide 04 (cupiennin) family. 10 (double chain) subfamily. As to expression, expressed by the venom gland.

It is found in the secreted. This Cupiennius salei (American wandering spider) protein is Toxin CSTX-16.